A 266-amino-acid chain; its full sequence is Large ribosomal subunit protein eL8 (266 aa).

Residues 1 to 11 show a composition bias toward basic residues; it reads MPKGKKAKGKK. The interval 1–21 is disordered; it reads MPKGKKAKGKKVAPAPSVAKK.

This sequence belongs to the eukaryotic ribosomal protein eL8 family. In terms of assembly, component of the large ribosomal subunit.

The protein resides in the cytoplasm. In terms of biological role, component of the large ribosomal subunit. The ribosome is a large ribonucleoprotein complex responsible for the synthesis of proteins in the cell. This is Large ribosomal subunit protein eL8 (rpl7a) from Ictalurus punctatus (Channel catfish).